A 151-amino-acid polypeptide reads, in one-letter code: Ribonuclease H (151 aa).

Residues 1–143 enclose the RNase H type-1 domain; sequence MSDVVVIHTD…ADVLATRGLQ (143 aa). Residues D10, E49, D71, and D135 each contribute to the Mg(2+) site.

This sequence belongs to the RNase H family. As to quaternary structure, monomer. Mg(2+) serves as cofactor.

It is found in the cytoplasm. It carries out the reaction Endonucleolytic cleavage to 5'-phosphomonoester.. In terms of biological role, endonuclease that specifically degrades the RNA of RNA-DNA hybrids. The protein is Ribonuclease H of Mycolicibacterium gilvum (strain PYR-GCK) (Mycobacterium gilvum (strain PYR-GCK)).